Consider the following 201-residue polypeptide: MKTLFFATTNENKINEVKNILDIPNLNLIVPQNFNIKETGKTFKENSLLKAKALFEILNNNQNVFGEDSGLCIEALNLEPGIYSKRYDTYKLCKKLSTNEKNQLILDLMKNEKNRKAYFICNISYISKNGQILNFEGIIKGKIALSLNDKKNYGFGYDSIFLTKNNKKLSDLTLEEKNKISHRGIAFLKFKKFLLKSLFNS.

Residue T8–K13 coordinates substrate. Residue D68 is the Proton acceptor of the active site. D68 is a binding site for Mg(2+). Residues S69, F155–D158, K177, and H182–R183 each bind substrate.

It belongs to the HAM1 NTPase family. In terms of assembly, homodimer. Mg(2+) is required as a cofactor.

It catalyses the reaction XTP + H2O = XMP + diphosphate + H(+). The enzyme catalyses dITP + H2O = dIMP + diphosphate + H(+). It carries out the reaction ITP + H2O = IMP + diphosphate + H(+). In terms of biological role, pyrophosphatase that catalyzes the hydrolysis of nucleoside triphosphates to their monophosphate derivatives, with a high preference for the non-canonical purine nucleotides XTP (xanthosine triphosphate), dITP (deoxyinosine triphosphate) and ITP. Seems to function as a house-cleaning enzyme that removes non-canonical purine nucleotides from the nucleotide pool, thus preventing their incorporation into DNA/RNA and avoiding chromosomal lesions. The protein is dITP/XTP pyrophosphatase of Borreliella burgdorferi (strain ATCC 35210 / DSM 4680 / CIP 102532 / B31) (Borrelia burgdorferi).